The primary structure comprises 446 residues: Putative ankyrin repeat protein L273 (446 aa).

6 ANK repeats span residues 71–100 (NGEF…KSNM), 124–153 (DHNK…RMRP), 206–237 (TDIE…KILM), 245–277 (VWVS…KMHV), 303–332 (ELEY…NSYY), and 365–394 (YTDI…QQII).

The chain is Putative ankyrin repeat protein L273 from Acanthamoeba polyphaga (Amoeba).